A 509-amino-acid polypeptide reads, in one-letter code: ATP synthase subunit alpha (509 aa).

An ATP-binding site is contributed by 169–176 (GDRQTGKT).

This sequence belongs to the ATPase alpha/beta chains family. In terms of assembly, F-type ATPases have 2 components, CF(1) - the catalytic core - and CF(0) - the membrane proton channel. CF(1) has five subunits: alpha(3), beta(3), gamma(1), delta(1), epsilon(1). CF(0) has three main subunits: a(1), b(2) and c(9-12). The alpha and beta chains form an alternating ring which encloses part of the gamma chain. CF(1) is attached to CF(0) by a central stalk formed by the gamma and epsilon chains, while a peripheral stalk is formed by the delta and b chains.

The protein localises to the cell inner membrane. The enzyme catalyses ATP + H2O + 4 H(+)(in) = ADP + phosphate + 5 H(+)(out). In terms of biological role, produces ATP from ADP in the presence of a proton gradient across the membrane. The alpha chain is a regulatory subunit. This Rhizobium etli (strain CIAT 652) protein is ATP synthase subunit alpha.